Here is a 433-residue protein sequence, read N- to C-terminus: 3-phosphoshikimate 1-carboxyvinyltransferase (433 aa).

3-phosphoshikimate is bound by residues lysine 15, serine 16, and arginine 20. Lysine 15 is a binding site for phosphoenolpyruvate. Glycine 96 and arginine 124 together coordinate phosphoenolpyruvate. 3-phosphoshikimate is bound by residues serine 169, glutamine 171, serine 195, aspartate 318, and lysine 345. Glutamine 171 serves as a coordination point for phosphoenolpyruvate. Catalysis depends on aspartate 318, which acts as the Proton acceptor. Positions 349 and 393 each coordinate phosphoenolpyruvate.

This sequence belongs to the EPSP synthase family. Monomer.

Its subcellular location is the cytoplasm. The catalysed reaction is 3-phosphoshikimate + phosphoenolpyruvate = 5-O-(1-carboxyvinyl)-3-phosphoshikimate + phosphate. The protein operates within metabolic intermediate biosynthesis; chorismate biosynthesis; chorismate from D-erythrose 4-phosphate and phosphoenolpyruvate: step 6/7. In terms of biological role, catalyzes the transfer of the enolpyruvyl moiety of phosphoenolpyruvate (PEP) to the 5-hydroxyl of shikimate-3-phosphate (S3P) to produce enolpyruvyl shikimate-3-phosphate and inorganic phosphate. The protein is 3-phosphoshikimate 1-carboxyvinyltransferase of Pelodictyon phaeoclathratiforme (strain DSM 5477 / BU-1).